We begin with the raw amino-acid sequence, 585 residues long: Zinc finger protein C11D3.17 (585 aa).

2 C2H2-type zinc fingers span residues 31–53 (FPCD…KACH) and 59–82 (IPCP…QRFH). The residue at position 553 (Thr553) is a Phosphothreonine.

Its subcellular location is the nucleus. This is Zinc finger protein C11D3.17 from Schizosaccharomyces pombe (strain 972 / ATCC 24843) (Fission yeast).